The following is a 74-amino-acid chain: Large ribosomal subunit protein bL31 (74 aa).

The Zn(2+) site is built by Cys-16, Cys-18, Cys-38, and Cys-41.

It belongs to the bacterial ribosomal protein bL31 family. Type A subfamily. Part of the 50S ribosomal subunit. Requires Zn(2+) as cofactor.

Its function is as follows. Binds the 23S rRNA. The polypeptide is Large ribosomal subunit protein bL31 (Mycobacteroides abscessus (strain ATCC 19977 / DSM 44196 / CCUG 20993 / CIP 104536 / JCM 13569 / NCTC 13031 / TMC 1543 / L948) (Mycobacterium abscessus)).